Consider the following 207-residue polypeptide: Glycerol-3-phosphate acyltransferase (207 aa).

Transmembrane regions (helical) follow at residues 2–22 (ILVLCFILAYFIGAIPFGVVI), 47–67 (MLGPVGGSIVLVLDILKGTLA), 72–92 (ILFGIEHHWLVLIVGLAAVFG), 121–141 (FFVIAFAIWFSLILLTSMVSV), and 155–175 (LVYHDWLLTTVACGLLVVFLI).

Belongs to the PlsY family. In terms of assembly, probably interacts with PlsX.

The protein localises to the cell membrane. It carries out the reaction an acyl phosphate + sn-glycerol 3-phosphate = a 1-acyl-sn-glycero-3-phosphate + phosphate. Its pathway is lipid metabolism; phospholipid metabolism. Catalyzes the transfer of an acyl group from acyl-phosphate (acyl-PO(4)) to glycerol-3-phosphate (G3P) to form lysophosphatidic acid (LPA). This enzyme utilizes acyl-phosphate as fatty acyl donor, but not acyl-CoA or acyl-ACP. This Lacticaseibacillus casei (strain BL23) (Lactobacillus casei) protein is Glycerol-3-phosphate acyltransferase.